We begin with the raw amino-acid sequence, 278 residues long: F-box only protein 17 (278 aa).

The region spanning 15–62 (SLALDALPPELLVQVLSHVPPRSLVTRCRPVCRAWRDIVDGPTVWLLQ) is the F-box domain. Positions 99-275 (YCLRAPFGRN…VTHSSVRVRI (177 aa)) constitute an FBA domain.

As to quaternary structure, part of a SCF (SKP1-cullin-F-box) protein ligase complex. Interacts with SKP1 and CUL1. In terms of tissue distribution, expressed in heart, skeletal muscle, liver and kidney. Expressed at lower levels in spleen and brain.

Functionally, substrate-recognition component of the SCF (SKP1-CUL1-F-box protein)-type E3 ubiquitin ligase complex. Able to recognize and bind denatured glycoproteins, which are modified with complex-type oligosaccharides. Also recognizes sulfated glycans. Does not bind high-mannose glycoproteins. This chain is F-box only protein 17 (FBXO17), found in Homo sapiens (Human).